We begin with the raw amino-acid sequence, 263 residues long: Probable HTH-type transcriptional regulator ArcR (263 aa).

The region spanning 14–74 (ITSVLNAVEI…DGDGTYQLGD (61 aa)) is the HTH iclR-type domain. A DNA-binding region (H-T-H motif) is located at residues 35 to 54 (LQELTTELDLTKATIHTYMA). Residues 89-262 (LYRLGREEID…ANIIEVRLET (174 aa)) form the IclR-ED domain.

Its function is as follows. Probably regulates transcription of the arcABC operon. The protein is Probable HTH-type transcriptional regulator ArcR (arcR) of Halobacterium salinarum (strain ATCC 29341 / DSM 671 / R1).